Consider the following 245-residue polypeptide: Biosynthetic peptidoglycan transglycosylase (245 aa).

The chain crosses the membrane as a helical span at residues 20–42; that stretch reads VYAGSVFAGAWLATQLFYLAQIA.

It belongs to the glycosyltransferase 51 family.

Its subcellular location is the cell inner membrane. It catalyses the reaction [GlcNAc-(1-&gt;4)-Mur2Ac(oyl-L-Ala-gamma-D-Glu-L-Lys-D-Ala-D-Ala)](n)-di-trans,octa-cis-undecaprenyl diphosphate + beta-D-GlcNAc-(1-&gt;4)-Mur2Ac(oyl-L-Ala-gamma-D-Glu-L-Lys-D-Ala-D-Ala)-di-trans,octa-cis-undecaprenyl diphosphate = [GlcNAc-(1-&gt;4)-Mur2Ac(oyl-L-Ala-gamma-D-Glu-L-Lys-D-Ala-D-Ala)](n+1)-di-trans,octa-cis-undecaprenyl diphosphate + di-trans,octa-cis-undecaprenyl diphosphate + H(+). It participates in cell wall biogenesis; peptidoglycan biosynthesis. Peptidoglycan polymerase that catalyzes glycan chain elongation from lipid-linked precursors. This chain is Biosynthetic peptidoglycan transglycosylase, found in Burkholderia orbicola (strain MC0-3).